The following is a 545-amino-acid chain: Threonine--tRNA ligase catalytic subunit (545 aa).

The segment at D139–P433 is catalytic. Zn(2+) contacts are provided by C231, H282, and H410.

Belongs to the class-II aminoacyl-tRNA synthetase family. In terms of assembly, homodimer. Probably interacts with its editing subunit. Zn(2+) serves as cofactor.

It localises to the cytoplasm. It catalyses the reaction tRNA(Thr) + L-threonine + ATP = L-threonyl-tRNA(Thr) + AMP + diphosphate + H(+). In terms of biological role, catalyzes the attachment of threonine to tRNA(Thr) in a two-step reaction: L-threonine is first activated by ATP to form Thr-AMP and then transferred to the acceptor end of tRNA(Thr). Also activates L-serine and transfers it to tRNA(Thr) but cannot deacylate incorrectly charged amino acid; unlike most archaea the editing function is found in a freestanding protein. This is Threonine--tRNA ligase catalytic subunit from Saccharolobus islandicus (strain L.S.2.15 / Lassen #1) (Sulfolobus islandicus).